The primary structure comprises 434 residues: MNNAVLNQPNKYDLVKDTLVLILAGGRGSRLHELTDKRAKPALYFGGNRRIIDFALSNCINSGLNRIGVITQYAAHSLLRHLQTGWSFLPQERGEFVDMLPARQQIDDNTWYRGTADSVYQNLAIIRGHYKPKYVLILAGDHIYKMDYSQMLLDHVSSGAKCTVGCIEVPREEAKEFGVMAVNETLKVKAFVEKPQDPPAMIGKPNSSLASMGIYVFNADYLYEALDRIKTPNTSHDFGKDVMPLALNDGVLYAHPFDRSCKGRNTEGAIYWKDVGTLDSFWQANIDLVSEEPQLDIYDQTWPIRGNPVQAYPSKFFYDEPNCKQVDNSLIAGGCMVKNASISYSVLFDNVSVNAGSSIEQSVILPQVKIGKNCMLRRCIIDRHVQIPDGMQIGVDLELDSKRFRISKNGIVLVTESMLHKLNGKSVASEAHLD.

Alpha-D-glucose 1-phosphate is bound by residues Tyr-112, Gly-178, 193–194, and Ser-211; that span reads EK.

Belongs to the bacterial/plant glucose-1-phosphate adenylyltransferase family. In terms of assembly, homotetramer.

It carries out the reaction alpha-D-glucose 1-phosphate + ATP + H(+) = ADP-alpha-D-glucose + diphosphate. Its pathway is glycan biosynthesis; glycogen biosynthesis. Involved in the biosynthesis of ADP-glucose, a building block required for the elongation reactions to produce glycogen. Catalyzes the reaction between ATP and alpha-D-glucose 1-phosphate (G1P) to produce pyrophosphate and ADP-Glc. The sequence is that of Glucose-1-phosphate adenylyltransferase from Mannheimia succiniciproducens (strain KCTC 0769BP / MBEL55E).